Reading from the N-terminus, the 207-residue chain is uncharacterized protein (207 aa).

This is an uncharacterized protein from Rhizobium meliloti (Ensifer meliloti).